The sequence spans 22 residues: Rothein 4.1 (22 aa).

The protein belongs to the frog skin active peptide (FSAP) family. Rothein subfamily. Expressed by the skin dorsal glands.

It is found in the secreted. Lacks antimicrobial activity. Does not inhibit the formation of NO by neuronal nitric oxide. The chain is Rothein 4.1 from Litoria rothii (Roth's tree frog).